Reading from the N-terminus, the 37-residue chain is Large ribosomal subunit protein bL36 (37 aa).

The protein belongs to the bacterial ribosomal protein bL36 family.

This Leptospira interrogans serogroup Icterohaemorrhagiae serovar copenhageni (strain Fiocruz L1-130) protein is Large ribosomal subunit protein bL36.